A 151-amino-acid polypeptide reads, in one-letter code: Cysteine protease inhibitor 5 (151 aa).

Disulfide bonds link cysteine 13–cysteine 65 and cysteine 114–cysteine 120.

It belongs to the protease inhibitor I3 (leguminous Kunitz-type inhibitor) family.

The protein localises to the vacuole. Functionally, inhibitor of cysteine proteases. May protect the plant by inhibiting proteases of invading organisms. The sequence is that of Cysteine protease inhibitor 5 from Solanum tuberosum (Potato).